The sequence spans 311 residues: Transcriptional repressor scratch 2 (311 aa).

The segment at 1–20 (MPRSFLVKKIKADGFQCSGV) is SNAG domain. 2 disordered regions span residues 71 to 90 (PAYPAAASEEYSDPESPQSS) and 120 to 156 (RRRAGAGGDAAGAGDAGGGGGGGGGGERAGRSGATAG). Over residues 124–146 (GAGGDAAGAGDAGGGGGGGGGGE) the composition is skewed to gly residues. C2H2-type zinc fingers lie at residues 161-183 (HACAECGKTYATSSNLSRHKQTH), 192-214 (RKCPTCGKAYVSMPALAMHVLTH), 218-240 (HKCGVCGKAFSRPWLLQGHMRSH), and 246-268 (FGCAHCGKAFADRSNLRAHMQTH). A C2H2-type 5; atypical zinc finger spans residues 274–297 (YRCRQCDKSFALKSYLHKHCEAAC).

The protein belongs to the snail C2H2-type zinc-finger protein family.

It localises to the nucleus. In terms of biological role, may be involved in transcriptional regulation. This chain is Transcriptional repressor scratch 2 (Scrt2), found in Mus musculus (Mouse).